Reading from the N-terminus, the 420-residue chain is ATP phosphoribosyltransferase regulatory subunit (420 aa).

The protein belongs to the class-II aminoacyl-tRNA synthetase family. HisZ subfamily. As to quaternary structure, heteromultimer composed of HisG and HisZ subunits.

It is found in the cytoplasm. It participates in amino-acid biosynthesis; L-histidine biosynthesis; L-histidine from 5-phospho-alpha-D-ribose 1-diphosphate: step 1/9. Required for the first step of histidine biosynthesis. May allow the feedback regulation of ATP phosphoribosyltransferase activity by histidine. The protein is ATP phosphoribosyltransferase regulatory subunit of Bacillus thuringiensis (strain Al Hakam).